The chain runs to 253 residues: Ubiquinone biosynthesis O-methyltransferase (253 aa).

S-adenosyl-L-methionine contacts are provided by R47, G78, D99, and M141.

This sequence belongs to the methyltransferase superfamily. UbiG/COQ3 family.

It carries out the reaction a 3-demethylubiquinol + S-adenosyl-L-methionine = a ubiquinol + S-adenosyl-L-homocysteine + H(+). The catalysed reaction is a 3-(all-trans-polyprenyl)benzene-1,2-diol + S-adenosyl-L-methionine = a 2-methoxy-6-(all-trans-polyprenyl)phenol + S-adenosyl-L-homocysteine + H(+). It participates in cofactor biosynthesis; ubiquinone biosynthesis. Functionally, O-methyltransferase that catalyzes the 2 O-methylation steps in the ubiquinone biosynthetic pathway. In Rhodopseudomonas palustris (strain BisB5), this protein is Ubiquinone biosynthesis O-methyltransferase.